We begin with the raw amino-acid sequence, 408 residues long: Argininosuccinate synthase (408 aa).

Residues 10–18 (AYSGGLDTS) and Ala-37 each bind ATP. Residues Tyr-90 and Ser-95 each coordinate L-citrulline. Gly-120 is a binding site for ATP. Positions 122, 126, and 127 each coordinate L-aspartate. Asn-126 serves as a coordination point for L-citrulline. Residues Arg-130, Ser-182, Ser-191, Glu-267, and Tyr-279 each coordinate L-citrulline.

The protein belongs to the argininosuccinate synthase family. Type 1 subfamily. As to quaternary structure, homotetramer.

It is found in the cytoplasm. It catalyses the reaction L-citrulline + L-aspartate + ATP = 2-(N(omega)-L-arginino)succinate + AMP + diphosphate + H(+). The protein operates within amino-acid biosynthesis; L-arginine biosynthesis; L-arginine from L-ornithine and carbamoyl phosphate: step 2/3. This chain is Argininosuccinate synthase, found in Paraburkholderia phytofirmans (strain DSM 17436 / LMG 22146 / PsJN) (Burkholderia phytofirmans).